The chain runs to 220 residues: Large ribosomal subunit protein uL16 (220 aa).

It belongs to the universal ribosomal protein uL16 family. In terms of assembly, component of the small ribosomal subunit. Mature ribosomes consist of a small (40S) and a large (60S) subunit. The 40S subunit contains about 33 different proteins and 1 molecule of RNA (18S). The 60S subunit contains about 49 different proteins and 3 molecules of RNA (25S, 5.8S and 5S).

In Zea mays (Maize), this protein is Large ribosomal subunit protein uL16 (RPL10).